The sequence spans 112 residues: UPF0122 protein CPE1714 (112 aa).

This sequence belongs to the UPF0122 family.

Might take part in the signal recognition particle (SRP) pathway. This is inferred from the conservation of its genetic proximity to ftsY/ffh. May be a regulatory protein. This is UPF0122 protein CPE1714 from Clostridium perfringens (strain 13 / Type A).